The chain runs to 724 residues: Ribosomal RNA large subunit methyltransferase K/L (724 aa).

Residues 42 to 153 (DAQRLVLWSR…KGRATLSVDL (112 aa)) form the THUMP domain.

This sequence belongs to the methyltransferase superfamily. RlmKL family.

It is found in the cytoplasm. The enzyme catalyses guanosine(2445) in 23S rRNA + S-adenosyl-L-methionine = N(2)-methylguanosine(2445) in 23S rRNA + S-adenosyl-L-homocysteine + H(+). The catalysed reaction is guanosine(2069) in 23S rRNA + S-adenosyl-L-methionine = N(2)-methylguanosine(2069) in 23S rRNA + S-adenosyl-L-homocysteine + H(+). Its function is as follows. Specifically methylates the guanine in position 2445 (m2G2445) and the guanine in position 2069 (m7G2069) of 23S rRNA. The sequence is that of Ribosomal RNA large subunit methyltransferase K/L from Xylella fastidiosa (strain M12).